We begin with the raw amino-acid sequence, 152 residues long: Large ribosomal subunit protein uL15 (152 aa).

The tract at residues 1–57 is disordered; that stretch reads MTSTLNTLKSNSGSRKKKLRKGRGIAAGQGASCGFGMRGQKSRSGRPTRPGFEGGQM. The span at 14–23 shows a compositional bias: basic residues; sequence SRKKKLRKGR. Gly residues predominate over residues 25–37; sequence IAAGQGASCGFGM.

It belongs to the universal ribosomal protein uL15 family. In terms of assembly, part of the 50S ribosomal subunit.

Functionally, binds to the 23S rRNA. In Prochlorococcus marinus (strain MIT 9301), this protein is Large ribosomal subunit protein uL15.